We begin with the raw amino-acid sequence, 336 residues long: DNA-directed RNA polymerase subunit alpha (336 aa).

The alpha N-terminal domain (alpha-NTD) stretch occupies residues 1–233 (MSSNSFLTPR…EQFSFFADLE (233 aa)). The alpha C-terminal domain (alpha-CTD) stretch occupies residues 247–336 (IDPILLRPVD…YIKEPGHASS (90 aa)).

Belongs to the RNA polymerase alpha chain family. In terms of assembly, homodimer. The RNAP catalytic core consists of 2 alpha, 1 beta, 1 beta' and 1 omega subunit. When a sigma factor is associated with the core the holoenzyme is formed, which can initiate transcription.

The catalysed reaction is RNA(n) + a ribonucleoside 5'-triphosphate = RNA(n+1) + diphosphate. Its function is as follows. DNA-dependent RNA polymerase catalyzes the transcription of DNA into RNA using the four ribonucleoside triphosphates as substrates. This is DNA-directed RNA polymerase subunit alpha from Nitrosomonas europaea (strain ATCC 19718 / CIP 103999 / KCTC 2705 / NBRC 14298).